The chain runs to 696 residues: MKFAEHLSAHITPEWRKQYTQYEAFKDMLYSAQDQAPSVEVTDEDTVKRYFAKFEEKFFQTCEKELAKINTFYSEKLAEAQRRFATLQNELQSSLDVQKESSGVTTLRQRRKPVFHLSHEERVQHRNIKDLKLAFSEFYLSLILLQNYQNLNFTGFRKILKKHDKILETSRGADWRVIHVEVAPFYTCKKINQLISETEAVVTNELEDGDRQKAMKRLRVPPLGAAQPAPAWTTFRVGLFCGIFIGLNITLGFAAVFKLETDRTVWPLIRIYRGGFLLIEFLFLLGINTYGWRQAGVNHVLIFELNPRNNLSHQHLFEIAGFLGILWCLSLLACFFAPISIIPIYVYPLALYGFMVFFLINPTKTFYYKSRFWLLKLLFRVFTAPFHKVGFADFWLADQLNSLSVILMDLEYMICFYSFELKWDESKGLLPNDPQEPEFCHKYSYGVRAIVQCIPAWLRFIQCLRRYRDTRRAFPHLVNAGKYSTTFFTVTFAALYSTHKEQNHSDTVVFFYLWVFFCIISSCYTLIWDLKMDWGLFDKNAGENTFLREEIVYPQKAYYYCAIIEDVILRFAWTIQISITATTFKPHVGDIIATVFAPLEVFRRFVWNFFRLENEHLDNCGEFRAVRDISVAPLNADDQTLLEQMMDQEDGVRNRQKNRSWKYNQSISLRRPRLASQSKARDTKVLIEDTDDEANT.

Residues 1–228 are Cytoplasmic-facing; the sequence is MKFAEHLSAH…RVPPLGAAQP (228 aa). One can recognise an SPX domain in the interval 2 to 224; sequence KFAEHLSAHI…MKRLRVPPLG (223 aa). Residues 158 to 165 are important for inositol polyphosphate binding; it reads KILKKHDK. The helical transmembrane segment at 229-259 threads the bilayer; it reads APAWTTFRVGLFCGIFIGLNITLGFAAVFKL. The Extracellular portion of the chain corresponds to 260–264; sequence ETDRT. A helical membrane pass occupies residues 265–296; that stretch reads VWPLIRIYRGGFLLIEFLFLLGINTYGWRQAG. At 297–309 the chain is on the cytoplasmic side; that stretch reads VNHVLIFELNPRN. The chain crosses the membrane as a helical span at residues 310–337; that stretch reads NLSHQHLFEIAGFLGILWCLSLLACFFA. Residues 338-343 are Extracellular-facing; it reads PISIIP. A helical membrane pass occupies residues 344 to 365; it reads IYVYPLALYGFMVFFLINPTKT. The helical intramembrane region spans 366–383; sequence FYYKSRFWLLKLLFRVFT. The Cytoplasmic segment spans residues 384-388; it reads APFHK. A discontinuously helical transmembrane segment spans residues 389 to 422; it reads VGFADFWLADQLNSLSVILMDLEYMICFYSFELK. Positions 398 and 401 each coordinate phosphate. The Extracellular segment spans residues 423-429; that stretch reads WDESKGL. The discontinuously helical transmembrane segment at 430-471 threads the bilayer; it reads LPNDPQEPEFCHKYSYGVRAIVQCIPAWLRFIQCLRRYRDTR. The 205-residue stretch at 439 to 643 folds into the EXS domain; it reads FCHKYSYGVR…LNADDQTLLE (205 aa). Arginine 472 is a topological domain (cytoplasmic). A helical membrane pass occupies residues 473–503; sequence AFPHLVNAGKYSTTFFTVTFAALYSTHKEQN. Lysine 482 and tyrosine 483 together coordinate phosphate. The Extracellular segment spans residues 504-506; it reads HSD. The helical transmembrane segment at 507-534 threads the bilayer; it reads TVVFFYLWVFFCIISSCYTLIWDLKMDW. At 535-553 the chain is on the cytoplasmic side; the sequence is GLFDKNAGENTFLREEIVY. Residues 554–585 traverse the membrane as a discontinuously helical segment; that stretch reads PQKAYYYCAIIEDVILRFAWTIQISITATTFK. Residue arginine 570 participates in phosphate binding. The Extracellular segment spans residues 586 to 587; the sequence is PH. A helical transmembrane segment spans residues 588–626; the sequence is VGDIIATVFAPLEVFRRFVWNFFRLENEHLDNCGEFRAV. Residues arginine 603 and arginine 604 each contribute to the phosphate site. The Cytoplasmic segment spans residues 627–696; sequence RDISVAPLNA…IEDTDDEANT (70 aa). Serine 668 is modified (phosphoserine). Threonine 690 bears the Phosphothreonine mark.

This sequence belongs to the SYG1 (TC 2.A.94) family. Homodimer.

The protein resides in the cell membrane. The enzyme catalyses phosphate(in) = phosphate(out). Functionally, inorganic ion transporter that mediates phosphate ion export across plasma membrane. Plays a major role in phosphate homeostasis, preventing intracellular phosphate accumulation and possible calcium phosphate precipitation, ultimately preserving calcium signaling. Binds inositol hexakisphosphate (Ins6P) and similar inositol polyphosphates, such as 5-diphospho-inositol pentakisphosphate (5-InsP7), which are important intracellular signaling molecules involved in regulation of phosphate flux. In terms of biological role, (Microbial infection) Receptor for xenotropic and polytropic murine leukemia (X- and P-MLV) retroviruses. This chain is Solute carrier family 53 member 1 (Xpr1), found in Mus spretus (Western Mediterranean mouse).